A 240-amino-acid polypeptide reads, in one-letter code: Small ribosomal subunit protein uS2 (240 aa).

Belongs to the universal ribosomal protein uS2 family.

This is Small ribosomal subunit protein uS2 from Wigglesworthia glossinidia brevipalpis.